Here is a 450-residue protein sequence, read N- to C-terminus: Solute carrier family 52, riboflavin transporter, member 2 (450 aa).

A run of 5 helical transmembrane segments spans residues 14 to 34, 47 to 67, 86 to 106, 112 to 132, and 147 to 167; these read LLVA…WVEL, LPSY…LVTL, GLGI…APVA, VAFL…NVTF, and FFLG…GQGV. N-linked (GlcNAc...) asparagine glycosylation occurs at asparagine 178. The helical transmembrane segment at 201-221 threads the bilayer; that stretch reads FFWVLTALLGTSAAAFQGLLL. Positions 227–236 are enriched in low complexity; sequence TSEPTTGTGL. A disordered region spans residues 227–264; that stretch reads TSEPTTGTGLRVETPGTEEEEEEEEASPLQEPPGQVAG. A compositionally biased stretch (acidic residues) spans 242-252; sequence GTEEEEEEEEA. Helical transmembrane passes span 282 to 302, 317 to 337, 344 to 364, 369 to 389, and 409 to 429; these read ACLL…LPAV, LAVV…MAVL, LCGL…LAAL, PLVG…LCAG, and ALLA…VAMF.

The protein belongs to the riboflavin transporter family.

It is found in the cell membrane. It catalyses the reaction riboflavin(in) = riboflavin(out). Riboflavin transport is Na(+)-independent but moderately pH-sensitive. Activity is strongly inhibited by riboflavin analogs, such as lumiflavin. Weakly inhibited by flavin adenine dinucleotide (FAD) and flavin mononucleotide (FMN). Its function is as follows. Plasma membrane transporter mediating the uptake by cells of the water soluble vitamin B2/riboflavin that plays a key role in biochemical oxidation-reduction reactions of the carbohydrate, lipid, and amino acid metabolism. May also act as a receptor for 4-hydroxybutyrate. The protein is Solute carrier family 52, riboflavin transporter, member 2 (Slc52a2) of Mus musculus (Mouse).